Here is a 174-residue protein sequence, read N- to C-terminus: Translation initiation factor IF-3 (174 aa).

Belongs to the IF-3 family. In terms of assembly, monomer.

The protein resides in the cytoplasm. IF-3 binds to the 30S ribosomal subunit and shifts the equilibrium between 70S ribosomes and their 50S and 30S subunits in favor of the free subunits, thus enhancing the availability of 30S subunits on which protein synthesis initiation begins. This chain is Translation initiation factor IF-3, found in Xanthobacter autotrophicus (strain ATCC BAA-1158 / Py2).